The chain runs to 184 residues: UPF0149 protein PputGB1_5261 (184 aa).

Belongs to the UPF0149 family.

The protein is UPF0149 protein PputGB1_5261 of Pseudomonas putida (strain GB-1).